A 489-amino-acid polypeptide reads, in one-letter code: Dipeptide and tripeptide permease B (489 aa).

At Met-1 to Arg-27 the chain is on the cytoplasmic side. A helical transmembrane segment spans residues Phe-28–Ser-48. Residues Gln-49–Ala-52 are Periplasmic-facing. Residues Phe-53–Val-73 traverse the membrane as a helical segment. Over Gly-74 to Arg-82 the chain is Cytoplasmic. A helical membrane pass occupies residues Thr-83 to Leu-103. The Periplasmic portion of the chain corresponds to Asn-104–Asp-106. Residues Leu-107–Ala-127 traverse the membrane as a helical segment. At Ser-128–Thr-146 the chain is on the cytoplasmic side. The chain crosses the membrane as a helical span at residues Leu-147 to Ala-167. Over Asp-168 to Tyr-172 the chain is Periplasmic. Residues Ala-173 to Cys-193 traverse the membrane as a helical segment. The Cytoplasmic portion of the chain corresponds to Arg-194–Leu-214. A helical transmembrane segment spans residues Leu-215–Val-235. Position 236 (Lys-236) is a topological domain, periplasmic. Residues Ile-237–Ala-257 form a helical membrane-spanning segment. The Cytoplasmic segment spans residues Phe-258–Lys-267. A helical transmembrane segment spans residues Met-268 to Met-288. Topologically, residues Pro-289–Gln-315 are periplasmic. Residues Ala-316–Ser-338 form a helical membrane-spanning segment. At Lys-339–Lys-348 the chain is on the cytoplasmic side. Residues Phe-349–Phe-369 traverse the membrane as a helical segment. Over Ala-370–Trp-379 the chain is Periplasmic. A helical transmembrane segment spans residues Phe-380–Leu-400. The Cytoplasmic segment spans residues Ala-401 to His-410. Residues Leu-411–Gly-431 traverse the membrane as a helical segment. At Tyr-432–Thr-454 the chain is on the periplasmic side. A helical transmembrane segment spans residues Gly-455–Val-475. Topologically, residues Pro-476–Gln-489 are cytoplasmic.

Belongs to the major facilitator superfamily. Proton-dependent oligopeptide transporter (POT/PTR) (TC 2.A.17) family. DtpB subfamily.

It is found in the cell inner membrane. In terms of biological role, proton-dependent permease that transports di- and tripeptides. In Salmonella typhimurium (strain LT2 / SGSC1412 / ATCC 700720), this protein is Dipeptide and tripeptide permease B.